Here is a 138-residue protein sequence, read N- to C-terminus: Fusaristatin A biosynthesis cluster protein FGSG_08206 (138 aa).

Residues 33 to 130 (VHRVTMFKMP…TIDGMMTVFF (98 aa)) enclose the Stress-response A/B barrel domain.

Its pathway is secondary metabolite biosynthesis. In terms of biological role, part of the gene cluster that mediates the biosynthesis of the lipopeptide fusaristatin A. Fusaristatin A consists of a polyketide chain linked to three amino acid residues glutamine (Gln), dehydroalanine (dehydro-Ala), and beta-aminoisobutyric acid. The biosynthesis starts with formation of a linear polyketide chain by the highly reducing polyketide synthase PKS6. The gene cluster does not contain an acyl-CoA ligase or an acyl-transferase, and it is therefore predicted that the polyketide is transferred directly to the nonribosomal peptide synthetase NRPS7. Modules 1-3 from NRPS7 incorporate dehydro-Ala, Gln, and beta-aminoisobutyric acid in the compound, which is released by cyclization. The beta-aminoisobutyric acid units are most likely not freely available to the NRPS, but can be synthesized from thymine, which requires a dehydrogenase, a monooxygenase, and an aminotransferase. The fusaristatin A cluster contains a cytochrome P450 monooxygenase (FGSG_08207) and an aminotransferase (FGSG_17085), which theoretically can perform two of the enzymatic steps. The enzymes may however also be involved in biosynthesis of dehydroalanine or modification of the polyketide. The dehydro-Ala residue can be a result of cyclization, where serine is dehydrated. The last gene of the cluster encodes a protein with an A/B barrel domain found in variable enzymes, which hampers functional prediction. The sequence is that of Fusaristatin A biosynthesis cluster protein FGSG_08206 from Gibberella zeae (strain ATCC MYA-4620 / CBS 123657 / FGSC 9075 / NRRL 31084 / PH-1) (Wheat head blight fungus).